Consider the following 251-residue polypeptide: Carboxy-S-adenosyl-L-methionine synthase (251 aa).

S-adenosyl-L-methionine-binding positions include Tyr48, 73–75, Asn140, and Arg207; that span reads GCS.

This sequence belongs to the class I-like SAM-binding methyltransferase superfamily. Cx-SAM synthase family. In terms of assembly, homodimer.

It carries out the reaction prephenate + S-adenosyl-L-methionine = carboxy-S-adenosyl-L-methionine + 3-phenylpyruvate + H2O. Its function is as follows. Catalyzes the conversion of S-adenosyl-L-methionine (SAM) to carboxy-S-adenosyl-L-methionine (Cx-SAM). This Hydrogenovibrio crunogenus (strain DSM 25203 / XCL-2) (Thiomicrospira crunogena) protein is Carboxy-S-adenosyl-L-methionine synthase.